The chain runs to 1018 residues: Serine/threonine-protein kinase 31 (1018 aa).

Positions 78-137 constitute a Tudor domain; it reads NLDPKKIYGGLFSEDKCWYRCKVLKTISDDKCLVRYIDYGNTEILNRSDIVEIPPELQFS. A coiled-coil region spans residues 298–358; it reads AKIKQDQKLI…TKHLESTLKT (61 aa). Residues 711-1018 enclose the Protein kinase domain; the sequence is IGLLKYMNSG…EKTRNGEANP (308 aa). Residues 717 to 725 and Lys738 contribute to the ATP site; that span reads MNSGGLLTM. Residues 988–1018 form a disordered region; sequence IECTQHSREDESKMESLDRYSEKTRNGEANP.

This sequence belongs to the protein kinase superfamily. Ser/Thr protein kinase family. Testis specific. Expressed only in male germ cells.

It carries out the reaction L-seryl-[protein] + ATP = O-phospho-L-seryl-[protein] + ADP + H(+). The enzyme catalyses L-threonyl-[protein] + ATP = O-phospho-L-threonyl-[protein] + ADP + H(+). In Mus musculus (Mouse), this protein is Serine/threonine-protein kinase 31 (Stk31).